Consider the following 239-residue polypeptide: Ribosomal RNA small subunit methyltransferase G (239 aa).

S-adenosyl-L-methionine is bound by residues G80, F85, 103 to 105 (EAS), 131 to 132 (AE), and R150.

This sequence belongs to the methyltransferase superfamily. RNA methyltransferase RsmG family.

Its subcellular location is the cytoplasm. Functionally, specifically methylates the N7 position of a guanine in 16S rRNA. The protein is Ribosomal RNA small subunit methyltransferase G of Caldanaerobacter subterraneus subsp. tengcongensis (strain DSM 15242 / JCM 11007 / NBRC 100824 / MB4) (Thermoanaerobacter tengcongensis).